The primary structure comprises 275 residues: Shikimate dehydrogenase (NADP(+)) (275 aa).

Shikimate is bound by residues 16 to 18 (SKS) and Thr63. The active-site Proton acceptor is Lys67. Shikimate is bound by residues Asn88 and Asp104. Residues 129 to 133 (GAGGA), 153 to 158 (NRTVAR), and Met219 contribute to the NADP(+) site. Tyr221 lines the shikimate pocket. Gly243 contributes to the NADP(+) binding site.

Belongs to the shikimate dehydrogenase family. As to quaternary structure, homodimer.

The catalysed reaction is shikimate + NADP(+) = 3-dehydroshikimate + NADPH + H(+). It functions in the pathway metabolic intermediate biosynthesis; chorismate biosynthesis; chorismate from D-erythrose 4-phosphate and phosphoenolpyruvate: step 4/7. Functionally, involved in the biosynthesis of the chorismate, which leads to the biosynthesis of aromatic amino acids. Catalyzes the reversible NADPH linked reduction of 3-dehydroshikimate (DHSA) to yield shikimate (SA). In Marinobacter nauticus (strain ATCC 700491 / DSM 11845 / VT8) (Marinobacter aquaeolei), this protein is Shikimate dehydrogenase (NADP(+)).